Here is a 199-residue protein sequence, read N- to C-terminus: Protein GrpE (199 aa).

The tract at residues 1–50 (MAKKSTRTTPEDSQASTTDSAATSTASEATQAATSATDDQAEQTTAVDPT) is disordered. Over residues 11–46 (EDSQASTTDSAATSTASEATQAATSATDDQAEQTTA) the composition is skewed to low complexity.

It belongs to the GrpE family. As to quaternary structure, homodimer.

The protein localises to the cytoplasm. Its function is as follows. Participates actively in the response to hyperosmotic and heat shock by preventing the aggregation of stress-denatured proteins, in association with DnaK and GrpE. It is the nucleotide exchange factor for DnaK and may function as a thermosensor. Unfolded proteins bind initially to DnaJ; upon interaction with the DnaJ-bound protein, DnaK hydrolyzes its bound ATP, resulting in the formation of a stable complex. GrpE releases ADP from DnaK; ATP binding to DnaK triggers the release of the substrate protein, thus completing the reaction cycle. Several rounds of ATP-dependent interactions between DnaJ, DnaK and GrpE are required for fully efficient folding. The chain is Protein GrpE from Lactiplantibacillus plantarum (strain ATCC BAA-793 / NCIMB 8826 / WCFS1) (Lactobacillus plantarum).